The following is a 585-amino-acid chain: Vacuolar protein 8 (585 aa).

Gly-2 carries the N-myristoyl glycine lipid modification. Residues Cys-4, Cys-5, and Cys-7 are each lipidated (S-palmitoyl cysteine). ARM repeat units follow at residues 39 to 76 (NRSDVDFFSNGPLRALSTLVYSENIDLQRSAALAFAEI), 77 to 116 (TEKDVREVNRDVLEPILILLQSADSEVQRAACGALGNLAV), 118 to 157 (TENKILIVEMGGLEPLIRQMMSTNIEVQCNAVGCITNLAT), 159 to 198 (DDNKSKIAKSGALIPLTKLAKSKDIRVQRNATGALLNMTH), 200 to 239 (GENRQELVNAGAVPVLVSLLSNEDADVQYYCTTALSNIAV), 243 to 282 (NRKKLASTEPKLVGQLVHLMDSPSPRVQCQATLALRNLAS), 284 to 323 (SGYQVEIVRAGGLPHLVQLLTCNHQPLVLAAVACIRNISI), 325 to 365 (PLNE…NLAA), and 409 to 448 (DDLKPKLYESHIIDVLIPLTFSENGEVCGNSAAALANLCS). The segment covering 531 to 562 (QIGQTTTTTTTNITNNNTNTNTNTNTTTSTSN) has biased composition (low complexity). The interval 531–565 (QIGQTTTTTTTNITNNNTNTNTNTNTTTSTSNEDQ) is disordered.

This sequence belongs to the beta-catenin family.

It is found in the vacuole membrane. Functionally, functions in both vacuole inheritance and protein targeting from the cytoplasm to vacuole. Vacuole inheritance has a role in the regulation of hyphal cell division. The polypeptide is Vacuolar protein 8 (VAC8) (Candida albicans (strain SC5314 / ATCC MYA-2876) (Yeast)).